Reading from the N-terminus, the 400-residue chain is Flavo-diiron protein FprA2 (400 aa).

Positions 32–216 are zinc metallo-hydrolase; it reads GTSYNAYLIK…VVKGLDILDA (185 aa). Residues H79, E81, D83, H147, D166, and H226 each contribute to the Fe cation site. In terms of domain architecture, Flavodoxin-like spans 257 to 397; the sequence is IPIFYCSAYG…KAFKFGEDFA (141 aa). Residues 263–267 and 345–372 each bind FMN; these read SAYGN and AFGS…KVFQ.

In the N-terminal section; belongs to the zinc metallo-hydrolase group 3 family. In terms of assembly, homotetramer. Requires FMN as cofactor. Fe cation serves as cofactor.

The enzyme catalyses 2 NADH + O2 + 2 H(+) = 2 NAD(+) + 2 H2O. In terms of biological role, catalyzes the four-electron reduction of molecular oxygen to water. In fact, functions as the terminal component of an NADH oxidase (NADH:O(2) oxidoreductase) when using NADH:rubredoxin oxidoreductase (NROR) and rubredoxin (Rd) as electron transport intermediaries between NADH and FDP. Is thus able to reductively scavenge intracellular dioxygen and is part of an oxidative stress defense system in C.acetobutylicum, an obligate anaerobic bacterium. Can also serve as the terminal component of an NADH:nitric oxide oxidoreductase (NOR) with a catalytic efficiency comparable to that of its NADH oxidase activity, and therefore might have an in vivo role in scavenging nitric oxide. This chain is Flavo-diiron protein FprA2 (fprA2), found in Clostridium acetobutylicum (strain ATCC 824 / DSM 792 / JCM 1419 / IAM 19013 / LMG 5710 / NBRC 13948 / NRRL B-527 / VKM B-1787 / 2291 / W).